Reading from the N-terminus, the 366-residue chain is Histidinol-phosphate aminotransferase (366 aa).

Lys228 is subject to N6-(pyridoxal phosphate)lysine.

The protein belongs to the class-II pyridoxal-phosphate-dependent aminotransferase family. Histidinol-phosphate aminotransferase subfamily. As to quaternary structure, homodimer. Pyridoxal 5'-phosphate is required as a cofactor.

The enzyme catalyses L-histidinol phosphate + 2-oxoglutarate = 3-(imidazol-4-yl)-2-oxopropyl phosphate + L-glutamate. The protein operates within amino-acid biosynthesis; L-histidine biosynthesis; L-histidine from 5-phospho-alpha-D-ribose 1-diphosphate: step 7/9. The chain is Histidinol-phosphate aminotransferase from Corynebacterium diphtheriae (strain ATCC 700971 / NCTC 13129 / Biotype gravis).